A 109-amino-acid polypeptide reads, in one-letter code: Nucleoid-associated protein BCB4264_A0025 (109 aa).

This sequence belongs to the YbaB/EbfC family. Homodimer.

It localises to the cytoplasm. The protein localises to the nucleoid. In terms of biological role, binds to DNA and alters its conformation. May be involved in regulation of gene expression, nucleoid organization and DNA protection. The protein is Nucleoid-associated protein BCB4264_A0025 of Bacillus cereus (strain B4264).